Reading from the N-terminus, the 501-residue chain is Aminoaldehyde dehydrogenase ALDH10A8, chloroplastic (501 aa).

D99 and L189 together coordinate Na(+). NAD(+)-binding positions include 238–243 and 238–245; these read GSFATG and GSFATGSK. The active-site Proton acceptor is E260. NAD(+) contacts are provided by C294 and E393. The active-site Nucleophile is C294.

The protein belongs to the aldehyde dehydrogenase family. Homodimer. As to expression, widely expressed.

It localises to the cytoplasm. It is found in the plastid. The protein resides in the chloroplast. The catalysed reaction is 4-aminobutanal + NAD(+) + H2O = 4-aminobutanoate + NADH + 2 H(+). It carries out the reaction 3-aminopropanal + NAD(+) + H2O = beta-alanine + NADH + 2 H(+). The enzyme catalyses 4-(trimethylamino)butanal + NAD(+) + H2O = 4-(trimethylamino)butanoate + NADH + 2 H(+). It catalyses the reaction 4-guanidinobutanal + NAD(+) + H2O = 4-guanidinobutanoate + NADH + 2 H(+). The catalysed reaction is betaine aldehyde + NAD(+) + H2O = glycine betaine + NADH + 2 H(+). The protein operates within amine and polyamine biosynthesis; betaine biosynthesis via choline pathway; betaine from betaine aldehyde: step 1/1. In terms of biological role, dehydrogenase that catalyzes the oxidation of several aminoaldehydes. Metabolizes and detoxifies aldehyde products of polyamine degradation to non-toxic amino acids. Catalyzes the oxidation of 4-aminobutanal and 3-aminopropanal to 4-aminobutanoate and beta-alanine, respectively. Production of 4-aminobutinoate by ALDH10A8 may confer tolerance to salt stress. Catalyzes the oxidation of 4-(trimethylamino)butanal and 4-guanidinobutanal to 4-trimethylammoniobutanoate and 4-guanidinobutanoate, respectively. Involved in glycine betaine biosynthesis. Catalyzes with low efficiency the oxidation of betaine aldehyde to glycine betaine. The chain is Aminoaldehyde dehydrogenase ALDH10A8, chloroplastic from Arabidopsis thaliana (Mouse-ear cress).